The chain runs to 1293 residues: Phosphoribosylformylglycinamidine synthase (1293 aa).

Residues 305–316 and A676 each bind ATP; that span reads GAATGSGGEIRD. The segment at 305-327 is disordered; it reads GAATGSGGEIRDEGATGRGSKPK. Residues D677, E716, N720, and D884 each contribute to the Mg(2+) site. S886 contributes to the ATP binding site. The region spanning 1040-1293 is the Glutamine amidotransferase type-1 domain; the sequence is MAILREQGVN…MFRNARVNLG (254 aa). The active-site Nucleophile is the C1133. Catalysis depends on residues H1258 and E1260.

It in the N-terminal section; belongs to the FGAMS family. As to quaternary structure, monomer.

The protein localises to the cytoplasm. It carries out the reaction N(2)-formyl-N(1)-(5-phospho-beta-D-ribosyl)glycinamide + L-glutamine + ATP + H2O = 2-formamido-N(1)-(5-O-phospho-beta-D-ribosyl)acetamidine + L-glutamate + ADP + phosphate + H(+). The protein operates within purine metabolism; IMP biosynthesis via de novo pathway; 5-amino-1-(5-phospho-D-ribosyl)imidazole from N(2)-formyl-N(1)-(5-phospho-D-ribosyl)glycinamide: step 1/2. In terms of biological role, phosphoribosylformylglycinamidine synthase involved in the purines biosynthetic pathway. Catalyzes the ATP-dependent conversion of formylglycinamide ribonucleotide (FGAR) and glutamine to yield formylglycinamidine ribonucleotide (FGAM) and glutamate. This chain is Phosphoribosylformylglycinamidine synthase, found in Shewanella oneidensis (strain ATCC 700550 / JCM 31522 / CIP 106686 / LMG 19005 / NCIMB 14063 / MR-1).